The primary structure comprises 119 residues: Phosphoribosyl-AMP cyclohydrolase (119 aa).

Asp77 lines the Mg(2+) pocket. Residue Cys78 participates in Zn(2+) binding. Mg(2+) is bound by residues Asp79 and Asp81. Residues Cys94 and Cys101 each coordinate Zn(2+).

The protein belongs to the PRA-CH family. Homodimer. The cofactor is Mg(2+). Zn(2+) is required as a cofactor.

It localises to the cytoplasm. It catalyses the reaction 1-(5-phospho-beta-D-ribosyl)-5'-AMP + H2O = 1-(5-phospho-beta-D-ribosyl)-5-[(5-phospho-beta-D-ribosylamino)methylideneamino]imidazole-4-carboxamide. It functions in the pathway amino-acid biosynthesis; L-histidine biosynthesis; L-histidine from 5-phospho-alpha-D-ribose 1-diphosphate: step 3/9. In terms of biological role, catalyzes the hydrolysis of the adenine ring of phosphoribosyl-AMP. In Cereibacter sphaeroides (strain ATCC 17023 / DSM 158 / JCM 6121 / CCUG 31486 / LMG 2827 / NBRC 12203 / NCIMB 8253 / ATH 2.4.1.) (Rhodobacter sphaeroides), this protein is Phosphoribosyl-AMP cyclohydrolase.